A 267-amino-acid chain; its full sequence is MAQNRITRLMQQQKKLLIAYYMPEFPVAGATLPVLEALQEHGADIIELGIPYSDPIGDGPVIQNAAHTAIRNGVTLRKVLELVRKARNGEGCKKITVPIVLMGYSNPLFAYGGDCFLADAIDSGVDGVLIPDFPPEEAIDYLDRAKNVGLSVIFLIAPVTSPERIEFIDSLSTDFSYCLAVNATTGTAKLSGHAGDAAVEEYLHRVRQHTKKKFVVGFGIRDKERVESMWKLADGAVVGTALLEQLAASTTPQECAERAGTFWQSLR.

Residues Glu-47 and Asp-58 each act as proton acceptor in the active site.

Belongs to the TrpA family. Tetramer of two alpha and two beta chains.

The catalysed reaction is (1S,2R)-1-C-(indol-3-yl)glycerol 3-phosphate + L-serine = D-glyceraldehyde 3-phosphate + L-tryptophan + H2O. Its pathway is amino-acid biosynthesis; L-tryptophan biosynthesis; L-tryptophan from chorismate: step 5/5. Functionally, the alpha subunit is responsible for the aldol cleavage of indoleglycerol phosphate to indole and glyceraldehyde 3-phosphate. In Chlorobium chlorochromatii (strain CaD3), this protein is Tryptophan synthase alpha chain.